An 846-amino-acid polypeptide reads, in one-letter code: Envelope glycoprotein gp160 (846 aa).

A signal peptide spans 1-31 (MRAREKERNCQNLWKWGIMLLGMLMTCSAAE). At 32–674 (DLWVTVYYGV…ITKWLWYIKL (643 aa)) the chain is on the extracellular side. Cysteines 53 and 73 form a disulfide. Residues asparagine 87, asparagine 129, asparagine 151, asparagine 179, asparagine 182, asparagine 229, asparagine 236, asparagine 257, asparagine 271, asparagine 284, and asparagine 290 are each glycosylated (N-linked (GlcNAc...) asparagine; by host). 5 cysteine pairs are disulfide-bonded: cysteine 118–cysteine 200, cysteine 125–cysteine 191, cysteine 130–cysteine 152, cysteine 213–cysteine 242, and cysteine 223–cysteine 234. A V1 region spans residues 130-151 (CTDELRNSKGNGKVEEEEKRKN). Residues 152–191 (CSFNVRDKREQVYALFYKLDIVPIDNNNRTNSTNYRLINC) are V2. The interval 291–327 (CTRPYKYTRQRTSIGLRQSLYTITGKKKKTGYIGQAH) is V3. Cysteines 291 and 328 form a disulfide. Asparagine 351 is a glycosylation site (N-linked (GlcNAc...) asparagine; by host). The segment at 360–370 (SSGGDPEITSH) is CD4-binding loop. 2 disulfides stabilise this stretch: cysteine 374–cysteine 435 and cysteine 381–cysteine 408. Positions 381-408 (CNTSRLFNSTWNQTNSTGFNNGTVTLPC) are V4. 8 N-linked (GlcNAc...) asparagine; by host glycosylation sites follow: asparagine 382, asparagine 388, asparagine 392, asparagine 395, asparagine 401, asparagine 438, asparagine 451, and asparagine 452. 2 V5 regions span residues 450–461 (ANNSSHETIRPG) and 453–461 (SSHETIRPG). Positions 502–522 (AIGLGAVFLGFLGAAGSTMGA) are fusion peptide. Residues 564-582 (KQLQARVLAVERYLRDQQL) are immunosuppression. Cysteine 588 and cysteine 594 are joined by a disulfide. 4 N-linked (GlcNAc...) asparagine; by host glycosylation sites follow: asparagine 601, asparagine 606, asparagine 615, and asparagine 627. Residues 623–657 (REIDNYTGLIYSLIEESQIQQEKNEKELLELDKWA) adopt a coiled-coil conformation. The segment at 652–673 (ELDKWASLWNWFSITKWLWYIK) is MPER; binding to GalCer. The helical transmembrane segment at 675–695 (FIMIVGGLIGLRIVFAVLSVV) threads the bilayer. Residues 696-846 (NRVRQGYSPL…IRQGLERLLL (151 aa)) are Cytoplasmic-facing. The YXXL motif; contains endocytosis signal signature appears at 702–705 (YSPL). 2 S-palmitoyl cysteine; by host lipidation sites follow: cysteine 754 and cysteine 827. The short motif at 845 to 846 (LL) is the Di-leucine internalization motif element.

It belongs to the HIV-1 env protein family. As to quaternary structure, the mature envelope protein (Env) consists of a homotrimer of non-covalently associated gp120-gp41 heterodimers. The resulting complex protrudes from the virus surface as a spike. There seems to be as few as 10 spikes on the average virion. Interacts with host CD4, CCR5 and CXCR4. Gp120 also interacts with the C-type lectins CD209/DC-SIGN and CLEC4M/DC-SIGNR (collectively referred to as DC-SIGN(R)). Gp120 and gp41 interact with GalCer. Gp120 interacts with host ITGA4/ITGB7 complex; on CD4+ T-cells, this interaction results in rapid activation of integrin ITGAL/LFA-1, which facilitates efficient cell-to-cell spreading of HIV-1. Gp120 interacts with cell-associated heparan sulfate; this interaction increases virus infectivity on permissive cells and may be involved in infection of CD4- cells. In terms of assembly, the mature envelope protein (Env) consists of a homotrimer of non-covalently associated gp120-gp41 heterodimers. The resulting complex protrudes from the virus surface as a spike. There seems to be as few as 10 spikes on the average virion. Highly glycosylated by host. The high number of glycan on the protein is reffered to as 'glycan shield' because it contributes to hide protein sequence from adaptive immune system. Post-translationally, palmitoylation of the transmembrane protein and of Env polyprotein (prior to its proteolytic cleavage) is essential for their association with host cell membrane lipid rafts. Palmitoylation is therefore required for envelope trafficking to classical lipid rafts, but not for viral replication. In terms of processing, specific enzymatic cleavages in vivo yield mature proteins. Envelope glycoproteins are synthesized as an inactive precursor that is heavily N-glycosylated and processed likely by host cell furin in the Golgi to yield the mature SU and TM proteins. The cleavage site between SU and TM requires the minimal sequence [KR]-X-[KR]-R. About 2 of the 9 disulfide bonds of gp41 are reduced by P4HB/PDI, following binding to CD4 receptor.

The protein resides in the virion membrane. Its subcellular location is the host cell membrane. It is found in the host endosome membrane. Oligomerizes in the host endoplasmic reticulum into predominantly trimers. In a second time, gp160 transits in the host Golgi, where glycosylation is completed. The precursor is then proteolytically cleaved in the trans-Golgi and thereby activated by cellular furin or furin-like proteases to produce gp120 and gp41. Functionally, attaches the virus to the host lymphoid cell by binding to the primary receptor CD4. This interaction induces a structural rearrangement creating a high affinity binding site for a chemokine coreceptor like CXCR4 and/or CCR5. Acts as a ligand for CD209/DC-SIGN and CLEC4M/DC-SIGNR, which are respectively found on dendritic cells (DCs), and on endothelial cells of liver sinusoids and lymph node sinuses. These interactions allow capture of viral particles at mucosal surfaces by these cells and subsequent transmission to permissive cells. HIV subverts the migration properties of dendritic cells to gain access to CD4+ T-cells in lymph nodes. Virus transmission to permissive T-cells occurs either in trans (without DCs infection, through viral capture and transmission), or in cis (following DCs productive infection, through the usual CD4-gp120 interaction), thereby inducing a robust infection. In trans infection, bound virions remain infectious over days and it is proposed that they are not degraded, but protected in non-lysosomal acidic organelles within the DCs close to the cell membrane thus contributing to the viral infectious potential during DCs' migration from the periphery to the lymphoid tissues. On arrival at lymphoid tissues, intact virions recycle back to DCs' cell surface allowing virus transmission to CD4+ T-cells. Its function is as follows. Acts as a class I viral fusion protein. Under the current model, the protein has at least 3 conformational states: pre-fusion native state, pre-hairpin intermediate state, and post-fusion hairpin state. During fusion of viral and target intracellular membranes, the coiled coil regions (heptad repeats) assume a trimer-of-hairpins structure, positioning the fusion peptide in close proximity to the C-terminal region of the ectodomain. The formation of this structure appears to drive apposition and subsequent fusion of viral and target cell membranes. Complete fusion occurs in host cell endosomes and is dynamin-dependent, however some lipid transfer might occur at the plasma membrane. The virus undergoes clathrin-dependent internalization long before endosomal fusion, thus minimizing the surface exposure of conserved viral epitopes during fusion and reducing the efficacy of inhibitors targeting these epitopes. Membranes fusion leads to delivery of the nucleocapsid into the cytoplasm. This chain is Envelope glycoprotein gp160, found in Human immunodeficiency virus type 1 group M subtype D (isolate NDK) (HIV-1).